The sequence spans 211 residues: Glutathione S-transferase class-mu 28 kDa isozyme (211 aa).

Position 2 is an N-acetylalanine (Ala2). Residues 4–86 (EHIKVIYFDG…YMAKKHHMMG (83 aa)) enclose the GST N-terminal domain. Residues Tyr10, 10–11 (YF), Arg16, 41–45 (WPKIK), Leu53, 55–56 (AV), and 70–71 (ES) contribute to the glutathione site. In terms of domain architecture, GST C-terminal spans 88–211 (TDEEYYSVEK…YLSNRPATPF (124 aa)).

Belongs to the GST superfamily. Mu family. In terms of assembly, homodimer. In terms of tissue distribution, in the adult, expressed in excretory epithelial cells but absent from the caecal epithelium and flame cells. Also expressed in the tegument and its extensions into the parenchyma. In the schistosomulum, expressed in the tegument and associated structures. Not expressed in digestive tract, reproductive organs or muscles (at protein level).

The enzyme catalyses RX + glutathione = an S-substituted glutathione + a halide anion + H(+). Conjugation of reduced glutathione to a wide number of exogenous and endogenous hydrophobic electrophiles. Functionally, GST isoenzymes appear to play a central role in the parasite detoxification system. Other functions are also suspected including a role in increasing the solubility of haematin in the parasite gut. This chain is Glutathione S-transferase class-mu 28 kDa isozyme (GST28), found in Schistosoma mansoni (Blood fluke).